The chain runs to 346 residues: N-acetyl-gamma-glutamyl-phosphate reductase (346 aa).

Residue Cys149 is part of the active site.

It belongs to the NAGSA dehydrogenase family. Type 1 subfamily.

The protein resides in the cytoplasm. The catalysed reaction is N-acetyl-L-glutamate 5-semialdehyde + phosphate + NADP(+) = N-acetyl-L-glutamyl 5-phosphate + NADPH + H(+). Its pathway is amino-acid biosynthesis; L-arginine biosynthesis; N(2)-acetyl-L-ornithine from L-glutamate: step 3/4. Functionally, catalyzes the NADPH-dependent reduction of N-acetyl-5-glutamyl phosphate to yield N-acetyl-L-glutamate 5-semialdehyde. The polypeptide is N-acetyl-gamma-glutamyl-phosphate reductase (Oceanobacillus iheyensis (strain DSM 14371 / CIP 107618 / JCM 11309 / KCTC 3954 / HTE831)).